The sequence spans 285 residues: 2,4-didehydro-3-deoxy-L-rhamnonate hydrolase (285 aa).

Residue leucine 73 participates in pyruvate binding. Positions 119, 121, and 150 each coordinate Mg(2+). Pyruvate-binding residues include lysine 168 and threonine 238.

It belongs to the FAH family. In terms of assembly, homodimer. It depends on Mg(2+) as a cofactor.

It carries out the reaction 2,4-didehydro-3-deoxy-L-rhamnonate + H2O = (S)-lactate + pyruvate + H(+). Its pathway is carbohydrate degradation; L-rhamnose degradation. Hydrolase that catalyzes the hydrolysis of 2,4-didehydro-3-deoxy-L-rhamnonate to pyruvate and L-lactate. Can also hydrolyze L-2,4-diketo-3-deoxylyxonate and L-2,4-diketo-3-deoxymannonate. In vitro can also use acylpyruvates such as acetylpyruvate and trimethylacetopyruvate. Catalyzes the fifth (last) step in an alternative pathway for rhamnose utilization that does not involve phosphorylated intermediates. In Sphingomonas sp. (strain SKA58), this protein is 2,4-didehydro-3-deoxy-L-rhamnonate hydrolase.